The sequence spans 390 residues: Putative nickel insertion protein (390 aa).

It belongs to the LarC family.

The chain is Putative nickel insertion protein from Myxococcus xanthus (strain DK1622).